Here is a 102-residue protein sequence, read N- to C-terminus: Small ribosomal subunit protein uS10 (102 aa).

Belongs to the universal ribosomal protein uS10 family. As to quaternary structure, part of the 30S ribosomal subunit.

Functionally, involved in the binding of tRNA to the ribosomes. This is Small ribosomal subunit protein uS10 from Parvibaculum lavamentivorans (strain DS-1 / DSM 13023 / NCIMB 13966).